We begin with the raw amino-acid sequence, 117 residues long: uncharacterized protein (117 aa).

Belongs to the mimivirus R69 family.

This is an uncharacterized protein from Acanthamoeba polyphaga mimivirus (APMV).